A 314-amino-acid polypeptide reads, in one-letter code: Methionyl-tRNA formyltransferase (314 aa).

110–113 is a (6S)-5,6,7,8-tetrahydrofolate binding site; the sequence is SLLP.

This sequence belongs to the Fmt family.

The enzyme catalyses L-methionyl-tRNA(fMet) + (6R)-10-formyltetrahydrofolate = N-formyl-L-methionyl-tRNA(fMet) + (6S)-5,6,7,8-tetrahydrofolate + H(+). Attaches a formyl group to the free amino group of methionyl-tRNA(fMet). The formyl group appears to play a dual role in the initiator identity of N-formylmethionyl-tRNA by promoting its recognition by IF2 and preventing the misappropriation of this tRNA by the elongation apparatus. This chain is Methionyl-tRNA formyltransferase, found in Bacillus anthracis (strain A0248).